The chain runs to 122 residues: uncharacterized protein (122 aa).

Its subcellular location is the plastid. This is an uncharacterized protein from Euglena longa (Euglenophycean alga).